The following is a 256-amino-acid chain: Small ribosomal subunit protein eS1 (256 aa).

The span at 1–18 (MAVGKNKRLSKGKKGLKK) shows a compositional bias: basic residues. The segment at 1–22 (MAVGKNKRLSKGKKGLKKKTQD) is disordered. Ala-2 is subject to N-acetylalanine; partial.

The protein belongs to the eukaryotic ribosomal protein eS1 family. Component of the small ribosomal subunit. Mature ribosomes consist of a small (40S) and a large (60S) subunit. The 40S subunit contains about 33 different proteins and 1 molecule of RNA (18S). The 60S subunit contains about 49 different proteins and 3 molecules of RNA (25S, 5.8S and 5S).

It is found in the cytoplasm. In Pyricularia oryzae (strain Y34) (Rice blast fungus), this protein is Small ribosomal subunit protein eS1.